The primary structure comprises 78 residues: MAKTASSLVLPIIFLVMFALVEQNMGCMAVLGSCGVITDCSGECISRFGPQARGYCDRDGGSGTCVCVYPCPADKPHM.

An N-terminal signal peptide occupies residues 1-23; it reads MAKTASSLVLPIIFLVMFALVEQ. Intrachain disulfides connect Cys27-Cys71, Cys34-Cys56, Cys40-Cys65, and Cys44-Cys67.

Belongs to the DEFL family.

It is found in the secreted. The sequence is that of Defensin-like protein 171 (LCR61) from Arabidopsis thaliana (Mouse-ear cress).